Here is a 590-residue protein sequence, read N- to C-terminus: Threonine dehydratase biosynthetic, chloroplastic (590 aa).

A chloroplast-targeting transit peptide spans 1–44; it reads MLSTSTTNSSILPFRSRASSSTFIARPPANFNSIFTTSVRVFPI. N6-(pyridoxal phosphate)lysine is present on K139. ACT-like domains are found at residues 416–488 and 509–580; these read ALLG…NISH and EVFV…IDQY.

It belongs to the serine/threonine dehydratase family. Requires pyridoxal 5'-phosphate as cofactor. In terms of tissue distribution, found at higher levels in flowers than in other organs.

The protein localises to the plastid. Its subcellular location is the chloroplast. It carries out the reaction L-threonine = 2-oxobutanoate + NH4(+). Its pathway is amino-acid biosynthesis; L-isoleucine biosynthesis; 2-oxobutanoate from L-threonine: step 1/1. Allosterically inhibited by isoleucine. The polypeptide is Threonine dehydratase biosynthetic, chloroplastic (Cicer arietinum (Chickpea)).